A 324-amino-acid polypeptide reads, in one-letter code: MSPPAAVSPPARSAELASAPAVKLPVGLSKNSAAATTVEEMEGKWDDFKFAPIRESQVSRAMTRRYFQDLDNYAESDIVIVGAGSCGLSTRYILGKKRPDLKIAIIEASVSPGGGAWLGGQLFSAMVMRKPADAFLREVGVPYEDEGNYVVVKHAALFTSTIMSKVLQLPNCKLFNATCVEDLITRPSKEGVRISGVVTNWTLVSMHHDDQSCMDPNTINAPLVISTTGHDAPMGAFCVKRLVSMGRIEKLGGMRGLDMNVAEDAIVKGTREIVPGLIVGGMELSEVDGANRMGPTFGAMVLSGLKAAEEALKVIDIRQKQNSF.

Substrate is bound by residues cysteine 86, 107–108 (EA), glycine 115, and valine 180. Cysteine 213 carries the post-translational modification 2,3-didehydroalanine (Cys). Substrate is bound by residues aspartate 215, histidine 230, methionine 282, and 292–294 (RMG).

This sequence belongs to the THI4 family. Homooctamer. Requires Fe cation as cofactor. During the catalytic reaction, a sulfide is transferred from Cys-213 to a reaction intermediate, generating a dehydroalanine residue.

Its subcellular location is the cytoplasm. The protein resides in the nucleus. It catalyses the reaction [ADP-thiazole synthase]-L-cysteine + glycine + NAD(+) = [ADP-thiazole synthase]-dehydroalanine + ADP-5-ethyl-4-methylthiazole-2-carboxylate + nicotinamide + 3 H2O + 2 H(+). Functionally, involved in biosynthesis of the thiamine precursor thiazole. Catalyzes the conversion of NAD and glycine to adenosine diphosphate 5-(2-hydroxyethyl)-4-methylthiazole-2-carboxylic acid (ADT), an adenylated thiazole intermediate. The reaction includes an iron-dependent sulfide transfer from a conserved cysteine residue of the protein to a thiazole intermediate. The enzyme can only undergo a single turnover, which suggests it is a suicide enzyme. May have additional roles in adaptation to various stress conditions and in DNA damage tolerance. The polypeptide is Thiamine thiazole synthase (sti35) (Fusarium solani subsp. phaseoli (Nectria haematococca)).